The sequence spans 193 residues: Acyl carrier protein phosphodiesterase (193 aa).

The protein belongs to the AcpH family.

It carries out the reaction holo-[ACP] + H2O = apo-[ACP] + (R)-4'-phosphopantetheine + H(+). Functionally, converts holo-ACP to apo-ACP by hydrolytic cleavage of the phosphopantetheine prosthetic group from ACP. This chain is Acyl carrier protein phosphodiesterase, found in Klebsiella pneumoniae (strain 342).